The sequence spans 264 residues: Myozenin-2 (264 aa).

Position 53 is an omega-N-methylarginine (Arg-53). Positions 98–134 (ESGSQQAPFTPPNTPDPRSPPNPENIAPGYSGPLKEI) are disordered. Phosphoserine is present on Ser-101. A compositionally biased stretch (pro residues) spans 106–120 (FTPPNTPDPRSPPNP). Phosphothreonine is present on residues Thr-107 and Thr-111. The residue at position 116 (Ser-116) is a Phosphoserine.

Belongs to the myozenin family. As to quaternary structure, interacts via its C-terminus with spectrin repeats 3 and 4 of ACTN2. Interacts with ACTN1, LDB3, MYOT and PPP3CA.

It is found in the cytoplasm. The protein localises to the myofibril. The protein resides in the sarcomere. It localises to the z line. In terms of biological role, myozenins may serve as intracellular binding proteins involved in linking Z line proteins such as alpha-actinin, gamma-filamin, TCAP/telethonin, LDB3/ZASP and localizing calcineurin signaling to the sarcomere. Plays an important role in the modulation of calcineurin signaling. May play a role in myofibrillogenesis. The chain is Myozenin-2 (MYOZ2) from Bos taurus (Bovine).